A 143-amino-acid polypeptide reads, in one-letter code: Large ribosomal subunit protein uL15 (143 aa).

Residues 1–54 are disordered; it reads MQLNSIKPAPGAKHPKRRVGRGIGSGLGKTAGRGHKGQKSRAGGFHKVGFEGGQ. The span at 21 to 31 shows a compositional bias: gly residues; that stretch reads RGIGSGLGKTA.

The protein belongs to the universal ribosomal protein uL15 family. Part of the 50S ribosomal subunit.

Its function is as follows. Binds to the 23S rRNA. The polypeptide is Large ribosomal subunit protein uL15 (Nitrosospira multiformis (strain ATCC 25196 / NCIMB 11849 / C 71)).